Reading from the N-terminus, the 287-residue chain is Protoheme IX farnesyltransferase (287 aa).

A run of 7 helical transmembrane segments spans residues 19–39 (LMVA…VTIT), 100–120 (MVLC…IVAV), 134–154 (FALL…WLAV), 162–182 (MLVV…WLHA), 212–232 (VWFH…LLEG), 233–253 (VGMR…AMLA), and 267–287 (VLCA…VSLF).

The protein belongs to the UbiA prenyltransferase family. Protoheme IX farnesyltransferase subfamily.

It localises to the cell inner membrane. The catalysed reaction is heme b + (2E,6E)-farnesyl diphosphate + H2O = Fe(II)-heme o + diphosphate. Its pathway is porphyrin-containing compound metabolism; heme O biosynthesis; heme O from protoheme: step 1/1. Its function is as follows. Converts heme B (protoheme IX) to heme O by substitution of the vinyl group on carbon 2 of heme B porphyrin ring with a hydroxyethyl farnesyl side group. The sequence is that of Protoheme IX farnesyltransferase from Nitratidesulfovibrio vulgaris (strain DP4) (Desulfovibrio vulgaris).